The chain runs to 374 residues: Pectate lyase 1 (374 aa).

A signal peptide spans 1-22 (MKYLLPSAAAGLLLLAAQPTMA). A disulfide bond links Cys-93 and Cys-176. Residues Asp-150, Asp-152, Glu-187, and Asp-191 each coordinate Ca(2+). Residue Arg-239 is part of the active site. A disulfide bond links Cys-350 and Cys-373.

Belongs to the polysaccharide lyase 1 family. PLADES subfamily. Ca(2+) is required as a cofactor.

It is found in the secreted. The catalysed reaction is Eliminative cleavage of (1-&gt;4)-alpha-D-galacturonan to give oligosaccharides with 4-deoxy-alpha-D-galact-4-enuronosyl groups at their non-reducing ends.. It functions in the pathway glycan metabolism; pectin degradation; 2-dehydro-3-deoxy-D-gluconate from pectin: step 2/5. Its function is as follows. Involved in maceration and soft-rotting of plant tissue. This Pectobacterium atrosepticum (strain SCRI 1043 / ATCC BAA-672) (Erwinia carotovora subsp. atroseptica) protein is Pectate lyase 1 (pel1).